A 447-amino-acid chain; its full sequence is NADH-ubiquinone oxidoreductase chain 4 (447 aa).

The next 13 helical transmembrane spans lie at leucine 4–phenylalanine 24, leucine 34–isoleucine 54, methionine 67–leucine 87, leucine 100–phenylalanine 120, methionine 149–isoleucine 169, leucine 189–tryptophan 209, methionine 223–isoleucine 243, phenylalanine 248–leucine 268, isoleucine 279–leucine 299, isoleucine 304–valine 324, methionine 349–serine 371, leucine 388–isoleucine 408, and glycine 422–leucine 442.

It belongs to the complex I subunit 4 family.

It localises to the mitochondrion membrane. The catalysed reaction is a ubiquinone + NADH + 5 H(+)(in) = a ubiquinol + NAD(+) + 4 H(+)(out). Functionally, core subunit of the mitochondrial membrane respiratory chain NADH dehydrogenase (Complex I) that is believed to belong to the minimal assembly required for catalysis. Complex I functions in the transfer of electrons from NADH to the respiratory chain. The immediate electron acceptor for the enzyme is believed to be ubiquinone. In Apis mellifera ligustica (Common honeybee), this protein is NADH-ubiquinone oxidoreductase chain 4 (ND4).